A 359-amino-acid chain; its full sequence is MDYTTLTTQDPDPNYTESGLASTSEDSQFLYGLGGESSPGHYGGAVSSRAVGGFRHSPVFQTFPLHWPETSAGIPSNLTAYGRSTGTLSFYPSAASALGPITSPPLYSASSFLLGSAPPAEREGSPKFLETLKTERASPLTSDLLPLEPRSPSILQVGYIGGGGQEFSLFQSTEDRECVNCGATVTPLWRRDMSGHYLCNACGLYHKMNGQNRPLIRPKKRLIVSKRAGTQCSNCHTSTTTLWRRNASGDPVCNACGLYYKLHNVNRPLTMKKEGIQTRNRKVSSRSKKKKQLDNPFEPPKAGVEEPSPYPFGPLLFHGQMPPMGHMINPPHHFLQSPRISHSAPAVSYRQAASGVTPP.

Residues 1–21 (MDYTTLTTQDPDPNYTESGLA) form a disordered region. 2 GATA-type zinc fingers span residues 178 to 202 (CVNC…CNAC) and 232 to 256 (CSNC…CNAC). 2 disordered regions span residues 271-311 (MKKE…SPYP) and 323-359 (PMGH…VTPP). Over residues 279 to 291 (RNRKVSSRSKKKK) the composition is skewed to basic residues.

As to expression, expressed in the developing ventral blood island, and in both tadpole and adult erythrocytes.

It is found in the nucleus. Functionally, transcription factor that acts synergistically with tal1/scl and lmo2 to specify embryonic dorsal mesoderm to a hematopoietic fate. This is GATA-binding factor 1-A (gata1-a) from Xenopus laevis (African clawed frog).